A 296-amino-acid polypeptide reads, in one-letter code: Cholesterol ring-cleaving hydrolase IpdA subunit (296 aa).

Belongs to the 3-oxoacid CoA-transferase subunit A family. Heterotetramer composed of 2 IpdA subunits and 2 IpdB subunits.

The catalysed reaction is (3E)-2-(2-carboxylatoethyl)-3-methyl-6-oxocyclohex-1-ene-1-carboxyl-CoA + H2O = 6-methyl-3,7-dioxodecanedioyl-CoA. It functions in the pathway steroid metabolism; cholesterol degradation. Its function is as follows. Involved in the final steps of cholesterol and steroid degradation. Opens the last steroid ring of cholesterol by catalyzing the hydrolysis of (3E)-2-(2-carboxylatoethyl)-3-methyl-6-oxocyclohex-1-ene-1-carboxyl-CoA (COCHEA-CoA) to 6-methyl-3,7-dioxodecanedioyl-CoA (MeDODA-CoA). In Rhodococcus jostii (strain RHA1), this protein is Cholesterol ring-cleaving hydrolase IpdA subunit.